The chain runs to 354 residues: Rhodopsin (354 aa).

Residues 1-36 (MNGTEGENFYVPMSNKTGVVRNPFEYPQYYLADHWM) are Extracellular-facing. Residues Asn-2 and Asn-15 are each glycosylated (N-linked (GlcNAc...) asparagine). A helical transmembrane segment spans residues 37-61 (FAVLAAYMFFLIITGFPVNFLTLFV). Over 62-73 (TIQNKKLRQPLN) the chain is Cytoplasmic. The chain crosses the membrane as a helical span at residues 74–96 (YILLNLAVANLFMVFGGFTTTLI). Residues 97 to 110 (TSMNGYFVFGSTGC) lie on the Extracellular side of the membrane. A disulfide bond links Cys-110 and Cys-187. Residues 111–133 (NLEGFFATLGGEISLWSLVVLAI) traverse the membrane as a helical segment. Positions 134 to 136 (ERY) match the 'Ionic lock' involved in activated form stabilization motif. Over 134 to 152 (ERYVVVCKPMSNFRFGSQH) the chain is Cytoplasmic. A helical membrane pass occupies residues 153–173 (AIAGVSLTWVMAMACAAPPLV). At 174–202 (GWSRYIPEGLQCSCGIDYYTPKPEINNVS) the chain is on the extracellular side. Asn-200 is a glycosylation site (N-linked (GlcNAc...) asparagine). A helical membrane pass occupies residues 203–224 (FVIYMFVVHFSIPLTIIFFCYG). Topologically, residues 225–252 (RLVCTVKAAAAQQQESETTQRAEREVTR) are cytoplasmic. The helical transmembrane segment at 253 to 274 (MVVIMVIGFLICWLPYASVALY) threads the bilayer. The Extracellular segment spans residues 275–286 (IFNNQGSEFGPV). The helical transmembrane segment at 287–308 (FMTIPSFFAKSSALYNPLIYIL) threads the bilayer. Position 296 is an N6-(retinylidene)lysine (Lys-296). At 309–354 (MNKQFRNCMITTLCCGKNPFEEEESTSASASKTEASSVSSSQVSPA) the chain is on the cytoplasmic side. Residues Cys-322 and Cys-323 are each lipidated (S-palmitoyl cysteine). The disordered stretch occupies residues 333-354 (STSASASKTEASSVSSSQVSPA). Low complexity predominate over residues 334–354 (TSASASKTEASSVSSSQVSPA).

This sequence belongs to the G-protein coupled receptor 1 family. Opsin subfamily. In terms of processing, phosphorylated on some or all of the serine and threonine residues present in the C-terminal region. Contains one covalently linked retinal chromophore.

The protein resides in the membrane. It localises to the cell projection. Its subcellular location is the cilium. It is found in the photoreceptor outer segment. Functionally, photoreceptor required for image-forming vision at low light intensity. While most salt water fish species use retinal as chromophore, most freshwater fish use 3-dehydroretinal, or a mixture of retinal and 3-dehydroretinal. Light-induced isomerization of 11-cis to all-trans retinal triggers a conformational change that activates signaling via G-proteins. Subsequent receptor phosphorylation mediates displacement of the bound G-protein alpha subunit by arrestin and terminates signaling. The sequence is that of Rhodopsin (rho) from Galeus melastomus (Blackmouth catshark).